Here is a 224-residue protein sequence, read N- to C-terminus: MRREISFLLQPRCLLLLVALTIFLVFALFNTGKDEEKQVIEDHEITNRVFLDVDIDGQRLGRIVIGLYGTVVPKTVENFRALCTGEKGKTSSGKPLHYKGTPFHRIISGFVIQGGDIIHGDGKSSDSIYGGTFPDENFKIQHSHAGMVAMANTGPDSNGSQFFITTVKASWLEGEHVVLGKVIQGMDNVFAIEGGAGTYSGKPRKKVVIADSGEIPKDKWDEER.

A signal peptide spans 1–27; that stretch reads MRREISFLLQPRCLLLLVALTIFLVFA. The 165-residue stretch at 50–214 folds into the PPIase cyclophilin-type domain; that stretch reads FLDVDIDGQR…KKVVIADSGE (165 aa). The N-linked (GlcNAc...) asparagine glycan is linked to Asn158.

This sequence belongs to the cyclophilin-type PPIase family. As to expression, ubiquitous.

The protein resides in the endoplasmic reticulum. The catalysed reaction is [protein]-peptidylproline (omega=180) = [protein]-peptidylproline (omega=0). Its function is as follows. PPIases accelerate the folding of proteins. It catalyzes the cis-trans isomerization of proline imidic peptide bonds in oligopeptides. The polypeptide is Peptidyl-prolyl cis-trans isomerase CYP21-1 (CYP21-1) (Arabidopsis thaliana (Mouse-ear cress)).